The following is a 136-amino-acid chain: Non-structural protein 1 (136 aa).

It belongs to the pneumovirus non-structural protein 1 family. In terms of assembly, monomer. Homomultimer. Heteromultimer with NS2. Interacts with the matrix protein M. Interacts with host ELOC and CUL2; this interaction allows NS1 to form an active E3 ligase with ELOC and CUL2. Interacts with host IRF3; this interaction leads to the disrupted association of IRF3 with CREBBP and thus reduced binding of IRF3 to the IFN-beta promoter. Interacts with host MAVS; this interaction prevents MAVS binding to RIGI and inhibits signaling pathway leading to interferon production. Interacts with host TRIM25 (via SPRY domain); this interaction suppresses RIGI ubiquitination and results in decreased interaction between RIGI and MAVS.

Its subcellular location is the host cytoplasm. The protein localises to the host mitochondrion. The protein resides in the host nucleus. In terms of biological role, plays a major role in antagonizing the type I IFN-mediated antiviral response by degrading or inhibiting multiple cellular factors required for either IFN induction or response pathways. Acts cooperatively with NS2 to repress activation and nuclear translocation of host IFN-regulatory factor IRF3. Also disrupts the association of IRF3 with CREBBP. Interacts with host mitochondrial-associated membrane (MAM) MAVS and prevents the interaction with RIGI. Interacts with TRIM25 to suppress TRIM25-mediated RIGI ubiquitination and thereby RIGI-MAVS interaction. Together with NS2, participates in the proteasomal degradation of host STAT2, IRF3, IRF7, TBK1 and RIGI through a NS-degradasome involving CUL2 and Elongin-C. The degradasome requires an intact mitochondrial MAVS. Decreases the levels of host TRAF3 and IKBKE/IKK-epsilon. As functions other than disruptions of the type I IFN-mediated antiviral signaling pathways, induces host SOCS1 and SOCS3 expression. Suppresses premature apoptosis by an NF-kappa-B-dependent, interferon-independent mechanism and thus facilitates virus growth. Additionally, NS1 may serve some inhibitory role in viral transcription and RNA replication. Suppresses proliferation and activation of host CD103+ CD8+ cytotoxic T-lymphocytes and Th17 helper T-lymphocytes. This is Non-structural protein 1 (1C) from Bos taurus (Bovine).